We begin with the raw amino-acid sequence, 115 residues long: U31-theraphotoxin-Cg1b (115 aa).

An N-terminal signal peptide occupies residues 1–18; that stretch reads MKLCVIIIASLMVASVSG. The propeptide occupies 19–51; the sequence is RLRKIKGTELDKKMLLEKLGHGMDIRFEETPRE. 4 disulfide bridges follow: Cys-52–Cys-67, Cys-60–Cys-73, Cys-64–Cys-113, and Cys-66–Cys-86.

This sequence belongs to the neurotoxin 03 (Tx2) family. 02 subfamily. In terms of tissue distribution, expressed by the venom gland.

It is found in the secreted. In terms of biological role, probable ion channel inhibitor. The protein is U31-theraphotoxin-Cg1b of Chilobrachys guangxiensis (Chinese earth tiger tarantula).